Here is a 504-residue protein sequence, read N- to C-terminus: Fibroblast growth factor receptor-like 1 (504 aa).

An N-terminal signal peptide occupies residues 1-24 (MTPSPLLLLLLPPLLLGAFPPAAA). Residues 25–378 (ARGPPKMADK…SSSATSLPWP (354 aa)) lie on the Extracellular side of the membrane. The region spanning 29–115 (PKMADKVVPR…GSLSVNYTLV (87 aa)) is the Ig-like C2-type 1 domain. Cysteine 51 and cysteine 99 are joined by a disulfide. A glycan (N-linked (GlcNAc...) asparagine) is linked at asparagine 111. Residues 123 to 155 (GKESLGPDSSSGGQEDPASQQWARPRFTQPSKM) form a disordered region. A compositionally biased stretch (polar residues) spans 129–144 (PDSSSGGQEDPASQQW). Ig-like C2-type domains follow at residues 147–237 (PRFT…YKVD) and 246–354 (PVLT…AFLT). Cysteine 172 and cysteine 221 form a disulfide bridge. 3 N-linked (GlcNAc...) asparagine glycosylation sites follow: asparagine 231, asparagine 255, and asparagine 293. An intrachain disulfide couples cysteine 268 to cysteine 338. The helical transmembrane segment at 379 to 399 (VVIGIPAGAVFILGTLLLWLC) threads the bilayer. The Cytoplasmic portion of the chain corresponds to 400-504 (QAQKKPCTPA…KVHQHIHYQC (105 aa)). Residues 407-418 (TPAPAPPLPGHR) are compositionally biased toward pro residues. The disordered stretch occupies residues 407 to 435 (TPAPAPPLPGHRPPGTARDRSGDKDLPSL). Residues 423-432 (ARDRSGDKDL) show a composition bias toward basic and acidic residues.

As to quaternary structure, interacts with FGF2 with a low affinity. In terms of tissue distribution, expressed preferentially in cartilaginous tissues and pancreas. Highly expressed in the liver, kidney, heart, brain and skeletal muscle. Weakly expressed in the lung, small intestine and spleen.

It localises to the membrane. Functionally, has a negative effect on cell proliferation. This Homo sapiens (Human) protein is Fibroblast growth factor receptor-like 1 (FGFRL1).